A 391-amino-acid polypeptide reads, in one-letter code: S-adenosylmethionine synthase (391 aa).

His16 contacts ATP. Asp18 serves as a coordination point for Mg(2+). Glu44 is a K(+) binding site. Positions 57 and 101 each coordinate L-methionine. The segment at 101-111 (QSADIAQGVDA) is flexible loop. ATP contacts are provided by residues 166–168 (DAK), Asp244, 250–251 (RK), Ala267, and Lys271. Residue Asp244 participates in L-methionine binding. Lys275 is a binding site for L-methionine.

The protein belongs to the AdoMet synthase family. As to quaternary structure, homotetramer; dimer of dimers. It depends on Mg(2+) as a cofactor. K(+) is required as a cofactor.

It localises to the cytoplasm. The catalysed reaction is L-methionine + ATP + H2O = S-adenosyl-L-methionine + phosphate + diphosphate. It participates in amino-acid biosynthesis; S-adenosyl-L-methionine biosynthesis; S-adenosyl-L-methionine from L-methionine: step 1/1. Catalyzes the formation of S-adenosylmethionine (AdoMet) from methionine and ATP. The overall synthetic reaction is composed of two sequential steps, AdoMet formation and the subsequent tripolyphosphate hydrolysis which occurs prior to release of AdoMet from the enzyme. This chain is S-adenosylmethionine synthase, found in Zymomonas mobilis subsp. mobilis (strain ATCC 31821 / ZM4 / CP4).